A 237-amino-acid chain; its full sequence is Proteasome subunit alpha (237 aa).

The protein belongs to the peptidase T1A family. As to quaternary structure, the 20S proteasome core is composed of 14 alpha and 14 beta subunits that assemble into four stacked heptameric rings, resulting in a barrel-shaped structure. The two inner rings, each composed of seven catalytic beta subunits, are sandwiched by two outer rings, each composed of seven alpha subunits. The catalytic chamber with the active sites is on the inside of the barrel. Has a gated structure, the ends of the cylinder being occluded by the N-termini of the alpha-subunits. Is capped by the proteasome-associated ATPase, ARC.

It localises to the cytoplasm. The protein operates within protein degradation; proteasomal Pup-dependent pathway. With respect to regulation, the formation of the proteasomal ATPase ARC-20S proteasome complex, likely via the docking of the C-termini of ARC into the intersubunit pockets in the alpha-rings, may trigger opening of the gate for substrate entry. Interconversion between the open-gate and close-gate conformations leads to a dynamic regulation of the 20S proteasome proteolysis activity. Component of the proteasome core, a large protease complex with broad specificity involved in protein degradation. The protein is Proteasome subunit alpha of Kineococcus radiotolerans (strain ATCC BAA-149 / DSM 14245 / SRS30216).